A 135-amino-acid polypeptide reads, in one-letter code: Mu-like prophage FluMu protein gp46 (135 aa).

The protein to phage Mu protein gp46.

In Haemophilus influenzae (strain ATCC 51907 / DSM 11121 / KW20 / Rd), this protein is Mu-like prophage FluMu protein gp46.